Reading from the N-terminus, the 270-residue chain is Putative pyruvate, phosphate dikinase regulatory protein (270 aa).

151–158 (GVSRTSKT) serves as a coordination point for ADP.

The protein belongs to the pyruvate, phosphate/water dikinase regulatory protein family. PDRP subfamily.

It catalyses the reaction N(tele)-phospho-L-histidyl/L-threonyl-[pyruvate, phosphate dikinase] + ADP = N(tele)-phospho-L-histidyl/O-phospho-L-threonyl-[pyruvate, phosphate dikinase] + AMP + H(+). It carries out the reaction N(tele)-phospho-L-histidyl/O-phospho-L-threonyl-[pyruvate, phosphate dikinase] + phosphate + H(+) = N(tele)-phospho-L-histidyl/L-threonyl-[pyruvate, phosphate dikinase] + diphosphate. Bifunctional serine/threonine kinase and phosphorylase involved in the regulation of the pyruvate, phosphate dikinase (PPDK) by catalyzing its phosphorylation/dephosphorylation. The sequence is that of Putative pyruvate, phosphate dikinase regulatory protein from Bacillus velezensis (strain DSM 23117 / BGSC 10A6 / LMG 26770 / FZB42) (Bacillus amyloliquefaciens subsp. plantarum).